The primary structure comprises 646 residues: Sulfate transporter 3.2 (646 aa).

Residues 1-76 (MSSKRASQYH…GYSLEYLKSD (76 aa)) lie on the Cytoplasmic side of the membrane. Residues 77-97 (VISGITIASLAIPQGISYAQL) traverse the membrane as a helical segment. Residues 98–99 (AN) lie on the Extracellular side of the membrane. A helical transmembrane segment spans residues 100–120 (LPPILGLYSSLVPPLVYAIMG). The Cytoplasmic segment spans residues 121-124 (SSRD). A helical transmembrane segment spans residues 125 to 145 (LAVGTVAVASLLTAAMLGKEV). Over 146 to 154 (NAVVNPKLY) the chain is Extracellular. The chain crosses the membrane as a helical span at residues 155-175 (LHLAFTATFFAGLMQTCLGLL). Position 176 (Arg176) is a topological domain, cytoplasmic. The helical transmembrane segment at 177 to 197 (LGFVVEILSHAAIVGFMGGAA) threads the bilayer. The Extracellular segment spans residues 198–235 (TVVCLQQLKGLLGLHHFTHSTDIVTVLRSIFSQSHMWR). A helical membrane pass occupies residues 236 to 256 (WESGVLGCCFLIFLLTTKYIS). Residues 257 to 262 (KKRPKL) lie on the Cytoplasmic side of the membrane. Residues 263-283 (FWISAMSPLVSVIFGTIFLYF) form a helical membrane-spanning segment. Residues 284-315 (LHDQFHGIQFIGELKKGINPPSITHLVFTPPY) lie on the Extracellular side of the membrane. A helical transmembrane segment spans residues 316–336 (VMLALKVGIITGVIALAEGIA). The Cytoplasmic portion of the chain corresponds to 337–354 (VGRSFAMYKNYNIDGNKE). The chain crosses the membrane as a helical span at residues 355–375 (MIAFGMMNILGSFSSCYLTTG). Residues 376–390 (PFSRSAVNYNAGCKT) lie on the Extracellular side of the membrane. The next 2 helical transmembrane spans lie at 391–411 (ALSN…LTPL) and 412–432 (FFYT…LGLV). The Extracellular portion of the chain corresponds to 433 to 447 (DYEAAIHLWKLDKFD). Residues 448–468 (FFVCLSAYLGVVFGTIEIGLI) form a helical membrane-spanning segment. The Cytoplasmic portion of the chain corresponds to 469–646 (LSVGISVMRL…DSPVPEFNNV (178 aa)). The STAS domain maps to 504-627 (HYPQAITRSS…LTVAEAVAAC (124 aa)).

The protein belongs to the SLC26A/SulP transporter (TC 2.A.53) family. In terms of tissue distribution, expressed only in leaves.

Its subcellular location is the membrane. H(+)/sulfate cotransporter that may play a role in the regulation of sulfate assimilation. This Arabidopsis thaliana (Mouse-ear cress) protein is Sulfate transporter 3.2 (SULTR3;2).